The sequence spans 258 residues: Pimeloyl-[acyl-carrier protein] methyl ester esterase (258 aa).

In terms of domain architecture, AB hydrolase-1 spans 16 to 244; the sequence is LVLVHGWGMN…QSSHAPFMTE (229 aa). Residues tryptophan 22, 82-83, and 146-150 each bind substrate; these read SL and FMALQ. The active-site Nucleophile is the serine 82. Active-site residues include aspartate 210 and histidine 238. Position 238 (histidine 238) interacts with substrate.

It belongs to the AB hydrolase superfamily. Carboxylesterase BioH family. In terms of assembly, monomer.

It localises to the cytoplasm. It carries out the reaction 6-carboxyhexanoyl-[ACP] methyl ester + H2O = 6-carboxyhexanoyl-[ACP] + methanol + H(+). It participates in cofactor biosynthesis; biotin biosynthesis. In terms of biological role, the physiological role of BioH is to remove the methyl group introduced by BioC when the pimeloyl moiety is complete. It allows to synthesize pimeloyl-ACP via the fatty acid synthetic pathway through the hydrolysis of the ester bonds of pimeloyl-ACP esters. The sequence is that of Pimeloyl-[acyl-carrier protein] methyl ester esterase from Vibrio atlanticus (strain LGP32) (Vibrio splendidus (strain Mel32)).